We begin with the raw amino-acid sequence, 151 residues long: 3-dehydroquinate dehydratase (151 aa).

The active-site Proton acceptor is the Tyr24. Positions 76, 82, and 89 each coordinate substrate. The Proton donor role is filled by His102. Residues 103–104 (VS) and Arg113 each bind substrate.

Belongs to the type-II 3-dehydroquinase family. As to quaternary structure, homododecamer.

The catalysed reaction is 3-dehydroquinate = 3-dehydroshikimate + H2O. The protein operates within metabolic intermediate biosynthesis; chorismate biosynthesis; chorismate from D-erythrose 4-phosphate and phosphoenolpyruvate: step 3/7. Catalyzes a trans-dehydration via an enolate intermediate. This chain is 3-dehydroquinate dehydratase, found in Afipia carboxidovorans (strain ATCC 49405 / DSM 1227 / KCTC 32145 / OM5) (Oligotropha carboxidovorans).